Consider the following 154-residue polypeptide: Myoglobin (154 aa).

One can recognise a Globin domain in the interval 2 to 148 (GLSDGEWQLV…FRKDMASNYK (147 aa)). Position 4 is a phosphoserine (Ser4). His65 is a binding site for nitrite. O2 is bound at residue His65. Thr68 bears the Phosphothreonine mark. Residue His94 participates in heme b binding.

This sequence belongs to the globin family. In terms of assembly, monomeric.

Its subcellular location is the cytoplasm. The protein resides in the sarcoplasm. It carries out the reaction Fe(III)-heme b-[protein] + nitric oxide + H2O = Fe(II)-heme b-[protein] + nitrite + 2 H(+). It catalyses the reaction H2O2 + AH2 = A + 2 H2O. Its function is as follows. Monomeric heme protein which primary function is to store oxygen and facilitate its diffusion within muscle tissues. Reversibly binds oxygen through a pentacoordinated heme iron and enables its timely and efficient release as needed during periods of heightened demand. Depending on the oxidative conditions of tissues and cells, and in addition to its ability to bind oxygen, it also has a nitrite reductase activity whereby it regulates the production of bioactive nitric oxide. Under stress conditions, like hypoxia and anoxia, it also protects cells against reactive oxygen species thanks to its pseudoperoxidase activity. The polypeptide is Myoglobin (MB) (Pongo pygmaeus (Bornean orangutan)).